A 129-amino-acid polypeptide reads, in one-letter code: Replication initiation control protein YabA (129 aa).

The segment at 52–71 (LSLTDEATPEPKAETEAEHG) is disordered. The segment covering 60 to 71 (PEPKAETEAEHG) has biased composition (basic and acidic residues). The Zn(2+) site is built by His103, Cys105, Cys119, and Cys122.

This sequence belongs to the YabA family. Homotetramer. Interacts with both DnaA and DnaN, acting as a bridge between these two proteins. Zn(2+) is required as a cofactor.

It localises to the cytoplasm. It is found in the nucleoid. Its function is as follows. Involved in control of chromosome replication initiation. Inhibits the cooperative binding of DnaA to the oriC region, thus negatively regulating initiation of chromosome replication. Inhibits the ability of DnaA-ATP to form a helix on DNA; does not disassemble preformed DnaA-DNA helices. Decreases the residence time of DnaA on the chromosome at its binding sites (oriC, replication forks and promoter-binding sites). Tethers DnaA to the replication machinery via the DNA polymerase beta sliding clamp subunit (dnaN). Associates with oriC and other DnaA targets on the chromosome in a DnaA-dependent manner. The chain is Replication initiation control protein YabA from Listeria monocytogenes serotype 4a (strain HCC23).